The chain runs to 71 residues: Protein SlyX homolog (71 aa).

Belongs to the SlyX family.

The protein is Protein SlyX homolog of Rhodospirillum rubrum (strain ATCC 11170 / ATH 1.1.1 / DSM 467 / LMG 4362 / NCIMB 8255 / S1).